A 1377-amino-acid chain; its full sequence is DNA-directed RNA polymerase subunit beta (1377 aa).

Belongs to the RNA polymerase beta chain family. In terms of assembly, the RNAP catalytic core consists of 2 alpha, 1 beta, 1 beta' and 1 omega subunit. When a sigma factor is associated with the core the holoenzyme is formed, which can initiate transcription.

It catalyses the reaction RNA(n) + a ribonucleoside 5'-triphosphate = RNA(n+1) + diphosphate. DNA-dependent RNA polymerase catalyzes the transcription of DNA into RNA using the four ribonucleoside triphosphates as substrates. In Brucella abortus (strain S19), this protein is DNA-directed RNA polymerase subunit beta.